The primary structure comprises 69 residues: Putative membrane protein insertion efficiency factor (69 aa).

This sequence belongs to the UPF0161 family.

Its subcellular location is the cell membrane. Its function is as follows. Could be involved in insertion of integral membrane proteins into the membrane. The polypeptide is Putative membrane protein insertion efficiency factor (Alkaliphilus metalliredigens (strain QYMF)).